The sequence spans 217 residues: Adenylate kinase (217 aa).

An ATP-binding site is contributed by 10 to 15 (GIGKGT). The tract at residues 30 to 59 (ATGDIFRKNFQENTPLGKESKKFINKGLLV) is NMP. Residues Thr31, Arg36, 57-59 (LLV), 85-88 (GFPR), and Gln92 each bind AMP. The tract at residues 126–163 (GRRICSHCGKVYHLDNLPPKIEGICDKDQKKLIQREDD) is LID. Arg127 is a binding site for ATP. Zn(2+)-binding residues include Cys130 and Cys133. 136–137 (VY) provides a ligand contact to ATP. The Zn(2+) site is built by Cys150 and Asp153. Residues Arg160 and Arg171 each contribute to the AMP site. Residue Gln199 coordinates ATP.

Belongs to the adenylate kinase family. As to quaternary structure, monomer.

It localises to the cytoplasm. It catalyses the reaction AMP + ATP = 2 ADP. It functions in the pathway purine metabolism; AMP biosynthesis via salvage pathway; AMP from ADP: step 1/1. Functionally, catalyzes the reversible transfer of the terminal phosphate group between ATP and AMP. Plays an important role in cellular energy homeostasis and in adenine nucleotide metabolism. This is Adenylate kinase from Phytoplasma australiense.